The following is a 122-amino-acid chain: RxLR effector protein Avh52 (122 aa).

Residues 1–21 (MRLTSILVLVIAATFHTTGTA) form the signal peptide. Positions 50–68 (RLLRRVEKDKVDYEQDEQR) match the RxLR-dEER motif. Positions 69 to 86 (SFGALKDAVKKLNPVTAV) are TAP1-binding. Residues 87–98 (KKFFKQRAKRKK) form a nuclear localization signal (NLS) region.

The protein belongs to the RxLR effector family. In terms of assembly, interacts with host acetyl transferase TAP1.

The protein resides in the secreted. It is found in the host nucleus. Its function is as follows. Effector that suppresses plant defense responses during the early stages of pathogen infection. Suppresses cell death induced by effectors and PAMPs in plant hosts. Interacts with host acetyltransferase TAP1 and causes TAP1 relocation into the nucleus where it acetylates histones H2A and H3 during early infection, thereby promoting susceptibility of host plant to P.sojae. In Phytophthora sojae (strain P6497) (Soybean stem and root rot agent), this protein is RxLR effector protein Avh52.